The primary structure comprises 172 residues: Bcl-2-related protein A1 (172 aa).

The BH1 signature appears at 77 to 97 (KEFEDGIINWGRIVTIFAFGG). The short motif at 132-147 (EWIRQNGGWEDGFIKK) is the BH2 element.

It belongs to the Bcl-2 family. As to quaternary structure, interacts directly with BCL2L11/BIM and PMAIP1. Interacts directly with BAK1, BID, BMF and BBC3. Interacts with BOP. Interacts with isoform 3, isoform 4 and isoform 5 of ING4. Interacts with UBQLN4. In terms of tissue distribution, expressed in hemopoietic tissues, including bone marrow, spleen and thymus.

It is found in the cytoplasm. In terms of biological role, retards apoptosis induced by IL-3 deprivation. May function in the response of hemopoietic cells to external signals and in maintaining endothelial survival during infection. Can inhibit apoptosis induced by serum starvation in the mammary epithelial cell line HC11. This Mus musculus (Mouse) protein is Bcl-2-related protein A1 (Bcl2a1).